A 271-amino-acid polypeptide reads, in one-letter code: DNA-directed RNA polymerase subunit Rpo3 (271 aa).

This sequence belongs to the archaeal Rpo3/eukaryotic RPB3 RNA polymerase subunit family. In terms of assembly, part of the RNA polymerase complex.

Its subcellular location is the cytoplasm. It catalyses the reaction RNA(n) + a ribonucleoside 5'-triphosphate = RNA(n+1) + diphosphate. In terms of biological role, DNA-dependent RNA polymerase (RNAP) catalyzes the transcription of DNA into RNA using the four ribonucleoside triphosphates as substrates. This chain is DNA-directed RNA polymerase subunit Rpo3, found in Picrophilus torridus (strain ATCC 700027 / DSM 9790 / JCM 10055 / NBRC 100828 / KAW 2/3).